The primary structure comprises 876 residues: Exosome complex component 10 homolog (876 aa).

The segment at 1-22 (MSGEESMPDEEQKQSEEEEEMI) is disordered. Positions 279–445 (TMIDTKEKLE…YSYDMLREQL (167 aa)) constitute a 3'-5' exonuclease domain. Mg(2+) contacts are provided by D303, E305, D361, and D430. In terms of domain architecture, HRDC spans 489–569 (NTRQDYALTH…VEARDVKLEK (81 aa)). Composition is skewed to basic and acidic residues over residues 690-730 (EKQE…EFDA), 741-752 (VPDDPNKPKDPE), and 834-847 (KPVR…DPFH). The interval 690-876 (EKQEEEERKE…NRQGTINYKK (187 aa)) is disordered. A compositionally biased stretch (basic residues) spans 848–861 (QKYRLKNKTKKNMA).

It belongs to the exosome component 10/RRP6 family. In terms of assembly, component of the RNA exosome complex. Interacts with crn-5. Mg(2+) serves as cofactor. Ubiquitously expressed.

The protein resides in the nucleus. The protein localises to the nucleolus. It localises to the nucleoplasm. In terms of biological role, catalytic component of the RNA exosome complex which has 3'-&gt;5' exoribonuclease activity and participates in a multitude of cellular RNA processing and degradation events. Involved in apoptotic DNA degradation. Involved in regulation of antisense ribosomal siRNA production. Involved in response to cold-warm shock. In Caenorhabditis elegans, this protein is Exosome complex component 10 homolog.